Consider the following 703-residue polypeptide: Lethal(3)malignant brain tumor-like protein 2 (703 aa).

The disordered stretch occupies residues 1 to 85 (MEKPRGTEEA…NNRSLDGSGS (85 aa)). Phosphoserine is present on serine 13. The segment covering 15-25 (PMEEEEEDDLD) has biased composition (acidic residues). Over residues 35–49 (SYNSSAGSESSSYLE) the composition is skewed to low complexity. Over residues 50–60 (ESSEAENEDRE) the composition is skewed to acidic residues. Residue serine 67 is modified to Phosphoserine. Residues 73-82 (SSANNRSLDG) show a composition bias toward polar residues. The segment at 81-116 (DGSGSEPAVCEMCGIVGTREAFFSKTKRFCSVSCSR) adopts an FCS-type zinc-finger fold. Residues cysteine 90, cysteine 93, cysteine 110, and cysteine 114 each contribute to the Zn(2+) site. MBT repeat units lie at residues 179–283 (FDWG…LVPP), 291–391 (TDWK…IKMS), 397–500 (MSHH…LTPP), and 508–604 (FAWE…LQPP). Residue serine 338 is modified to Phosphoserine. Lysine 405 is covalently cross-linked (Glycyl lysine isopeptide (Lys-Gly) (interchain with G-Cter in SUMO2)). A disordered region spans residues 604–649 (PVSAEPNTPQKGKDTTKKKKKQFGKKRKRIPSAKTRPLRQGSKKPL). Over residues 619–634 (TKKKKKQFGKKRKRIP) the composition is skewed to basic residues. Residues lysine 647 and lysine 673 each participate in a glycyl lysine isopeptide (Lys-Gly) (interchain with G-Cter in SUMO2) cross-link. Residues 675–703 (EHQDISSLDRSPSPQLPLPIESIKQERNN) are disordered. Phosphoserine is present on residues serine 681, serine 685, and serine 687. Lysine 698 is covalently cross-linked (Glycyl lysine isopeptide (Lys-Gly) (interchain with G-Cter in SUMO1); alternate). Lysine 698 participates in a covalent cross-link: Glycyl lysine isopeptide (Lys-Gly) (interchain with G-Cter in SUMO2); alternate.

As to quaternary structure, part of the E2F6.com-1 complex in G0 phase composed of E2F6, MGA, MAX, TFDP1, CBX3, BAT8, EUHMTASE1, RING1, RNF2, MBLR, BAT8 and YAF2. Post-translationally, phosphorylated. As to expression, ubiquitous.

The protein localises to the nucleus. In terms of biological role, putative Polycomb group (PcG) protein. PcG proteins maintain the transcriptionally repressive state of genes, probably via a modification of chromatin, rendering it heritably changed in its expressibility. Its association with a chromatin-remodeling complex suggests that it may contribute to prevent expression of genes that trigger the cell into mitosis. Binds to monomethylated and dimethylated 'Lys-20' on histone H4. Binds histone H3 peptides that are monomethylated or dimethylated on 'Lys-4', 'Lys-9' or 'Lys-27'. The sequence is that of Lethal(3)malignant brain tumor-like protein 2 (L3mbtl2) from Mus musculus (Mouse).